The chain runs to 310 residues: E3 ubiquitin-protein ligase AIP2 (310 aa).

Residues 230–271 (CCICKENLVIGDKMQELPCKHTFHPPCLKPWLDEHNSCPICR) form an RING-type; atypical zinc finger. The stretch at 276 to 306 (TDDQKYENWKEREKEAEEERKGAENAVRGGE) forms a coiled coil. Over residues 285-298 (KEREKEAEEERKGA) the composition is skewed to basic and acidic residues. The tract at residues 285–310 (KEREKEAEEERKGAENAVRGGEYMYV) is disordered.

As to quaternary structure, interacts with ABI3 (via C-terminus). Auto-ubiquitinated. As to expression, highly expressed in leaves and at lower levels in flowers and seeds.

It localises to the nucleus. The protein resides in the cytoplasm. The enzyme catalyses S-ubiquitinyl-[E2 ubiquitin-conjugating enzyme]-L-cysteine + [acceptor protein]-L-lysine = [E2 ubiquitin-conjugating enzyme]-L-cysteine + N(6)-ubiquitinyl-[acceptor protein]-L-lysine.. It participates in protein modification; protein ubiquitination. Its function is as follows. E3 ubiquitin-protein ligase that acts as a negative regulator of abscisic acid (ABA) signaling. Mediates ubiquitination and subsequent proteasomal degradation of the transcription factor ABI3. This is E3 ubiquitin-protein ligase AIP2 (AIP2) from Arabidopsis thaliana (Mouse-ear cress).